The sequence spans 351 residues: Actin maturation protease (351 aa).

The span at 1-19 shows a compositional bias: pro residues; the sequence is MTSPCSPPLKPPISPPKTP. Residues 1 to 70 form a disordered region; sequence MTSPCSPPLK…PPAATGPAPR (70 aa). Low complexity predominate over residues 36 to 50; it reads LDFSALPSPPWSQQT. Residues 51–64 show a composition bias toward pro residues; the sequence is PVPPPLPLPPPPAA. The tract at residues 124–244 is peptidase C39-like; it reads SLIQEGPQCG…WAVSAGVLLG (121 aa). The active site involves C132. The residue at position 316 (S316) is a Phosphoserine.

It belongs to the ACTMAP family. In terms of assembly, interacts (via N-terminus) with PFN2 isoforms IIa and IIb; the interactions may facilitate efficient cleavage of the acetylated N-terminus of immature actin. Interacts with PFN1.

The protein localises to the cytoplasm. The catalysed reaction is N-terminal N(alpha)-acetyl-L-methionyl-L-aspartyl-[protein] + H2O = N-terminal L-aspartyl-[protein] + N-acetyl-L-methionine. It catalyses the reaction N-terminal N(alpha)-acetyl-L-methionyl-L-glutamyl-[protein] + H2O = N-terminal L-glutamyl-[protein] + N-acetyl-L-methionine. It carries out the reaction N-terminal N(alpha)-acetyl-L-cysteinyl-L-aspartyl-[protein] + H2O = N-terminal L-aspartyl-[protein] + N-acetyl-L-cysteine. The enzyme catalyses N-terminal N(alpha)-acetyl-L-cysteinyl-L-glutamyl-[protein] + H2O = N-terminal L-glutamyl-[protein] + N-acetyl-L-cysteine. Actin maturation protease that specifically mediates the cleavage of immature acetylated N-terminal actin, thereby contributing to actin maturation. Cleaves N-terminal acetylated methionine of immature cytoplasmic beta- and gamma-actins ACTB and ACTG1 after translation. Cleaves N-terminal acetylated cysteine of muscle alpha-actins ACTA1, ACTC1 and ACTA2 after canonical removal of N-terminal methionine. In Homo sapiens (Human), this protein is Actin maturation protease.